The chain runs to 502 residues: Hexokinase-2 (502 aa).

The helical transmembrane segment at 4–24 (VAVATTVVCSVAVCAAAALIV) threads the bilayer. A Hexokinase domain is found at 35–487 (ARVIEILKAF…SGVGAALLAA (453 aa)). The interval 90–228 (SGDETGFFYA…GLDMLVAALV (139 aa)) is hexokinase small subdomain. 3 residues coordinate ADP: Gly104, Thr105, and Asn106. Residues Thr194, Lys195, Asn229, and Asp230 each contribute to the D-glucose site. The interval 229–476 (NDTIGTLAGG…ESVEVILSND (248 aa)) is hexokinase large subdomain. Thr253 lines the ADP pocket. The D-glucose site is built by Asn256, Glu284, and Glu315. Gly441 contributes to the ADP binding site.

Belongs to the hexokinase family. As to expression, highly expressed in siliques, at intermediate levels in roots and flowers, and at lower levels in stems, rosette and cauline leaves.

It is found in the mitochondrion outer membrane. It carries out the reaction a D-hexose + ATP = a D-hexose 6-phosphate + ADP + H(+). The catalysed reaction is D-fructose + ATP = D-fructose 6-phosphate + ADP + H(+). The enzyme catalyses D-glucose + ATP = D-glucose 6-phosphate + ADP + H(+). It functions in the pathway carbohydrate metabolism; hexose metabolism. It participates in carbohydrate degradation; glycolysis; D-glyceraldehyde 3-phosphate and glycerone phosphate from D-glucose: step 1/4. Functionally, fructose and glucose phosphorylating enzyme. May be involved in the phosphorylation of glucose during the export from mitochondrion to cytosol. Acts as a sugar sensor which may regulate sugar-dependent gene repression or activation. Mediates the effects of sugar on plant growth and development independently of its catalytic activity or the sugar metabolism. May regulate the execution of program cell death in plant cells. The polypeptide is Hexokinase-2 (HXK2) (Arabidopsis thaliana (Mouse-ear cress)).